A 568-amino-acid chain; its full sequence is Malate synthase, glyoxysomal (568 aa).

The interval 1 to 20 (MGSLGMYSESGLTKKGSSRG) is disordered. R183 functions as the Proton acceptor in the catalytic mechanism. The Proton donor role is filled by D469. Positions 566–568 (SKL) match the Microbody targeting signal motif.

The protein belongs to the malate synthase family.

The protein localises to the glyoxysome. It catalyses the reaction glyoxylate + acetyl-CoA + H2O = (S)-malate + CoA + H(+). The protein operates within carbohydrate metabolism; glyoxylate cycle; (S)-malate from isocitrate: step 2/2. The sequence is that of Malate synthase, glyoxysomal from Cucumis sativus (Cucumber).